The primary structure comprises 202 residues: Peptidyl-tRNA hydrolase (202 aa).

Tyrosine 14 is a binding site for tRNA. The active-site Proton acceptor is the histidine 19. Residues phenylalanine 64, asparagine 66, and asparagine 112 each contribute to the tRNA site.

This sequence belongs to the PTH family. Monomer.

The protein resides in the cytoplasm. It carries out the reaction an N-acyl-L-alpha-aminoacyl-tRNA + H2O = an N-acyl-L-amino acid + a tRNA + H(+). Functionally, hydrolyzes ribosome-free peptidyl-tRNAs (with 1 or more amino acids incorporated), which drop off the ribosome during protein synthesis, or as a result of ribosome stalling. In terms of biological role, catalyzes the release of premature peptidyl moieties from peptidyl-tRNA molecules trapped in stalled 50S ribosomal subunits, and thus maintains levels of free tRNAs and 50S ribosomes. This is Peptidyl-tRNA hydrolase from Methylobacterium radiotolerans (strain ATCC 27329 / DSM 1819 / JCM 2831 / NBRC 15690 / NCIMB 10815 / 0-1).